The chain runs to 122 residues: MARETDCDLDKKTSLTSDAEMRPEPPALCVNPGNPVFSCMLDPKTLHTATSLSKAQMIMYKTSASQYGAFSPRPFFFPCKFLPQEQAFTEHLKTTGFYQNNSLNVGPDRTRTIDSPNYQHTL.

A compositionally biased stretch (basic and acidic residues) spans 1 to 23 (MARETDCDLDKKTSLTSDAEMRP). Disordered regions lie at residues 1 to 26 (MARE…PEPP) and 99 to 122 (QNNS…QHTL). Over residues 113 to 122 (IDSPNYQHTL) the composition is skewed to polar residues.

The protein belongs to the PIERCE2 family. In terms of assembly, microtubule inner protein component of sperm flagellar doublet microtubules. Interacts with CFAP53, ODAD1 and ODAD3; the interactions link the outer dynein arms docking complex (ODA-DC) to the internal microtubule inner proteins (MIP) in cilium axoneme.

It localises to the cytoplasm. The protein localises to the cytoskeleton. Its subcellular location is the cilium axoneme. It is found in the flagellum axoneme. Microtubule inner protein involved in the attachment of outer dynein arms (ODAs) to dynein-decorated doublet microtubules (DMTs) in cilia axoneme, which is required for motile cilia beating. This Mus musculus (Mouse) protein is Piercer of microtubule wall 2 protein.